The primary structure comprises 273 residues: Transposable element Tc1 transposase (273 aa).

The protein belongs to the transposase 5 family.

The protein localises to the nucleus. Probably essential for transposable element Tc1 transposition. The insertion of Tc1 is the main cause of spontaneous mutations. It is an endonuclease which can produce a single strand nick at the 5'-end of the transposon. This Caenorhabditis elegans protein is Transposable element Tc1 transposase (tc1a).